Consider the following 77-residue polypeptide: PTS system N-acetylglucosamine-specific EIIB component (77 aa).

The region spanning 2–77 is the PTS EIIB type-1 domain; sequence ASKAEKIVAG…PIAAEIEDMM (76 aa). The active-site Phosphocysteine intermediate; for EIIB activity is Cys24.

The catalysed reaction is N(pros)-phospho-L-histidyl-[protein] + N-acetyl-D-glucosamine(out) = N-acetyl-D-glucosamine 6-phosphate(in) + L-histidyl-[protein]. Functionally, the phosphoenolpyruvate-dependent sugar phosphotransferase system (sugar PTS), a major carbohydrate active transport system, catalyzes the phosphorylation of incoming sugar substrates concomitantly with their translocation across the cell membrane. This system is involved in N-acetylglucosamine (GlcNAc) transport. The chain is PTS system N-acetylglucosamine-specific EIIB component from Streptomyces coelicolor (strain ATCC BAA-471 / A3(2) / M145).